A 160-amino-acid chain; its full sequence is 6,7-dimethyl-8-ribityllumazine synthase (160 aa).

5-amino-6-(D-ribitylamino)uracil contacts are provided by residues Phe-32, 66 to 68 (ALE), and 90 to 92 (CII). 95-96 (ET) contributes to the (2S)-2-hydroxy-3-oxobutyl phosphate binding site. Catalysis depends on His-98, which acts as the Proton donor. Residue Asn-123 participates in 5-amino-6-(D-ribitylamino)uracil binding. Arg-137 serves as a coordination point for (2S)-2-hydroxy-3-oxobutyl phosphate.

The protein belongs to the DMRL synthase family.

It catalyses the reaction (2S)-2-hydroxy-3-oxobutyl phosphate + 5-amino-6-(D-ribitylamino)uracil = 6,7-dimethyl-8-(1-D-ribityl)lumazine + phosphate + 2 H2O + H(+). It functions in the pathway cofactor biosynthesis; riboflavin biosynthesis; riboflavin from 2-hydroxy-3-oxobutyl phosphate and 5-amino-6-(D-ribitylamino)uracil: step 1/2. Functionally, catalyzes the formation of 6,7-dimethyl-8-ribityllumazine by condensation of 5-amino-6-(D-ribitylamino)uracil with 3,4-dihydroxy-2-butanone 4-phosphate. This is the penultimate step in the biosynthesis of riboflavin. The polypeptide is 6,7-dimethyl-8-ribityllumazine synthase (Methylibium petroleiphilum (strain ATCC BAA-1232 / LMG 22953 / PM1)).